Here is a 364-residue protein sequence, read N- to C-terminus: Aminomethyltransferase (364 aa).

The protein belongs to the GcvT family. In terms of assembly, the glycine cleavage system is composed of four proteins: P, T, L and H.

It carries out the reaction N(6)-[(R)-S(8)-aminomethyldihydrolipoyl]-L-lysyl-[protein] + (6S)-5,6,7,8-tetrahydrofolate = N(6)-[(R)-dihydrolipoyl]-L-lysyl-[protein] + (6R)-5,10-methylene-5,6,7,8-tetrahydrofolate + NH4(+). In terms of biological role, the glycine cleavage system catalyzes the degradation of glycine. In Thermotoga petrophila (strain ATCC BAA-488 / DSM 13995 / JCM 10881 / RKU-1), this protein is Aminomethyltransferase.